A 51-amino-acid chain; its full sequence is Large ribosomal subunit protein eL39 (51 aa).

This sequence belongs to the eukaryotic ribosomal protein eL39 family.

This is Large ribosomal subunit protein eL39 from Thermococcus gammatolerans (strain DSM 15229 / JCM 11827 / EJ3).